A 177-amino-acid polypeptide reads, in one-letter code: Peptide methionine sulfoxide reductase MsrA (177 aa).

The active site involves cysteine 14.

Belongs to the MsrA Met sulfoxide reductase family.

It carries out the reaction L-methionyl-[protein] + [thioredoxin]-disulfide + H2O = L-methionyl-(S)-S-oxide-[protein] + [thioredoxin]-dithiol. The catalysed reaction is [thioredoxin]-disulfide + L-methionine + H2O = L-methionine (S)-S-oxide + [thioredoxin]-dithiol. Has an important function as a repair enzyme for proteins that have been inactivated by oxidation. Catalyzes the reversible oxidation-reduction of methionine sulfoxide in proteins to methionine. The sequence is that of Peptide methionine sulfoxide reductase MsrA from Bacillus velezensis (strain DSM 23117 / BGSC 10A6 / LMG 26770 / FZB42) (Bacillus amyloliquefaciens subsp. plantarum).